Reading from the N-terminus, the 380-residue chain is Protein Wnt-5a (380 aa).

Residues M1–S35 form the signal peptide. Positions F36–Y61 are excised as a propeptide. The cysteines at positions 104 and 115 are disulfide-linked. N-linked (GlcNAc...) asparagine glycans are attached at residues N114 and N120. 10 disulfide bridges follow: C154-C162, C164-C182, C238-C252, C240-C247, C309-C340, C325-C335, C339-C379, C355-C370, C357-C367, and C362-C363. S244 is lipidated: O-palmitoleoyl serine; by PORCN. Residues N312 and N326 are each glycosylated (N-linked (GlcNAc...) asparagine).

Belongs to the Wnt family. As to quaternary structure, forms a soluble 1:1 complex with AFM; this prevents oligomerization and is required for prolonged biological activity. The complex with AFM may represent the physiological form in body fluids. Homooligomer; disulfide-linked, leading to inactivation (in vitro). Interacts with PORCN. Interacts with WLS. Interacts with glypican GCP3. Interacts with PKD1 (via extracellular domain). Interacts with TMEM67. Post-translationally, glycosylation is necessary for secretion but not for activity. Palmitoleoylation is required for efficient binding to frizzled receptors. Depalmitoleoylation leads to Wnt signaling pathway inhibition. In terms of processing, proteolytic processing by TIKI1 and TIKI2 promotes oxidation and formation of large disulfide-bond oligomers, leading to inactivation of WNT5A.

It is found in the secreted. The protein localises to the extracellular space. It localises to the extracellular matrix. Its function is as follows. Ligand for members of the frizzled family of seven transmembrane receptors. Can activate or inhibit canonical Wnt signaling, depending on receptor context. In the presence of FZD4, activates beta-catenin signaling. In the presence of ROR2, inhibits the canonical Wnt pathway by promoting beta-catenin degradation through a GSK3-independent pathway which involves down-regulation of beta-catenin-induced reporter gene expression. Suppression of the canonical pathway allows chondrogenesis to occur. Inhibits tumor formation. Stimulates cell migration. Decreases proliferation, migration, invasiveness and clonogenicity of carcinoma cells and may act as a tumor suppressor. Mediates motility of melanoma cells. Required during embryogenesis for extension of the primary anterior-posterior axis and for outgrowth of limbs and the genital tubercle. Inhibits type II collagen expression in chondrocytes. This chain is Protein Wnt-5a, found in Oryctolagus cuniculus (Rabbit).